Consider the following 580-residue polypeptide: YTH domain-containing family protein 2 (580 aa).

The segment at 1–45 is disordered; the sequence is MSASSLLEQRPKGQGNKVQNGSVHQKDGLNDDDFEPYLSPQARPN. Ser-2 carries the N-acetylserine modification. 6 positions are modified to phosphoserine: Ser-2, Ser-4, Ser-5, Ser-22, Ser-39, and Ser-196. Residues 2 to 385 are localization to mRNA processing bodies (P-bodies); sequence SASSLLEQRP…QAGSGSTPSE (384 aa). Positions 247–388 are disordered; that stretch reads AKQQPKLKTK…SGSTPSEPHP (142 aa). The span at 291–317 shows a compositional bias: polar residues; it reads ALVQNIGQQPTQGSPQPVGQQANNSPP. Over residues 338-350 the composition is skewed to low complexity; that stretch reads AQLSVQQQAAQPT. Ser-360 carries the phosphoserine modification. The segment covering 360-372 has biased composition (gly residues); that stretch reads SGFGHNGVDGNGV. Positions 373–384 are enriched in polar residues; sequence GQTQAGSGSTPS. The segment at 386–580 is interaction with m6A-containing mRNAs; the sequence is PHPVLEKLRS…VKKERQGRGK (195 aa). At Ser-395 the chain carries Phosphoserine. Residues 411–545 form the YTH domain; that stretch reads GRVFIIKSYS…EKAKQVLKII (135 aa). Residues 417–419, Asp-423, 433–434, Asn-463, Trp-487, and Trp-492 contribute to the RNA site; these read KSY and WC.

Belongs to the YTHDF family. YTHDF2 subfamily. Interacts with CNOT1; interaction is direct and promotes recruitment of the CCR4-NOT complex. Interacts with YTHDF3. Interacts with RIDA/HRSP12; interaction leads to recruitment of the ribonuclease P/MRP complex. Ubiquitinated by the SCF(SKP2) complex, leading to its degradation.

It is found in the cytoplasm. The protein localises to the cytosol. Its subcellular location is the P-body. The protein resides in the stress granule. It localises to the nucleus. Functionally, specifically recognizes and binds N6-methyladenosine (m6A)-containing RNAs, and regulates their stability. M6A is a modification present at internal sites of mRNAs and some non-coding RNAs and plays a role in mRNA stability and processing. Acts as a regulator of mRNA stability by promoting degradation of m6A-containing mRNAs via interaction with the CCR4-NOT and ribonuclease P/MRP complexes, depending on the context. The YTHDF paralogs (YTHDF1, YTHDF2 and YTHDF3) share m6A-containing mRNAs targets and act redundantly to mediate mRNA degradation and cellular differentiation. M6A-containing mRNAs containing a binding site for RIDA/HRSP12 (5'-GGUUC-3') are preferentially degraded by endoribonucleolytic cleavage: cooperative binding of RIDA/HRSP12 and YTHDF2 to transcripts leads to recruitment of the ribonuclease P/MRP complex. Other m6A-containing mRNAs undergo deadenylation via direct interaction between YTHDF2 and CNOT1, leading to recruitment of the CCR4-NOT and subsequent deadenylation of m6A-containing mRNAs. Required maternally to regulate oocyte maturation: probably acts by binding to m6A-containing mRNAs, thereby regulating maternal transcript dosage during oocyte maturation, which is essential for the competence of oocytes to sustain early zygotic development. Also required during spermatogenesis: regulates spermagonial adhesion by promoting degradation of m6A-containing transcripts coding for matrix metallopeptidases. Also involved in hematopoietic stem cells specification by binding to m6A-containing mRNAs, leading to promote their degradation. Also acts as a regulator of neural development by promoting m6A-dependent degradation of neural development-related mRNA targets. Inhibits neural specification of induced pluripotent stem cells by binding to methylated neural-specific mRNAs and promoting their degradation, thereby restraining neural differentiation. Regulates circadian regulation of hepatic lipid metabolism: acts by promoting m6A-dependent degradation of PPARA transcripts. Regulates the innate immune response to infection by inhibiting the type I interferon response: acts by binding to m6A-containing IFNB transcripts and promoting their degradation. May also act as a promoter of cap-independent mRNA translation following heat shock stress: upon stress, relocalizes to the nucleus and specifically binds mRNAs with some m6A methylation mark at their 5'-UTR, protecting demethylation of mRNAs by FTO, thereby promoting cap-independent mRNA translation. Regulates mitotic entry by promoting the phase-specific m6A-dependent degradation of WEE1 transcripts. Promotes formation of phase-separated membraneless compartments, such as P-bodies or stress granules, by undergoing liquid-liquid phase separation upon binding to mRNAs containing multiple m6A-modified residues: polymethylated mRNAs act as a multivalent scaffold for the binding of YTHDF proteins, juxtaposing their disordered regions and thereby leading to phase separation. The resulting mRNA-YTHDF complexes then partition into different endogenous phase-separated membraneless compartments, such as P-bodies, stress granules or neuronal RNA granules. May also recognize and bind RNAs modified by C5-methylcytosine (m5C) and act as a regulator of rRNA processing. The chain is YTH domain-containing family protein 2 from Bos taurus (Bovine).